A 534-amino-acid chain; its full sequence is NAD(P)H-quinone oxidoreductase chain 4 (534 aa).

The next 14 membrane-spanning stretches (helical) occupy residues 12–32 (FPWL…IPFF), 44–64 (FALS…INGF), 96–116 (MPLI…AWPV), 120–140 (PKLF…VFAV), 144–164 (LLFF…LAIW), 176–196 (FIIY…AMGF), 220–240 (ILCY…VPLH), 251–271 (TAPV…YALL), 285–305 (FAPL…LTSF), 314–334 (IAYS…SFSS), 340–360 (AMLQ…LVGA), 384–404 (FALW…SGFV), 425–445 (VVMA…LLSM), and 472–492 (VYII…PRLV).

It belongs to the complex I subunit 4 family.

It localises to the cellular thylakoid membrane. It carries out the reaction a plastoquinone + NADH + (n+1) H(+)(in) = a plastoquinol + NAD(+) + n H(+)(out). The enzyme catalyses a plastoquinone + NADPH + (n+1) H(+)(in) = a plastoquinol + NADP(+) + n H(+)(out). NDH-1 shuttles electrons from NAD(P)H, via FMN and iron-sulfur (Fe-S) centers, to quinones in the respiratory chain. The immediate electron acceptor for the enzyme in this species is believed to be plastoquinone. Couples the redox reaction to proton translocation (for every two electrons transferred, four hydrogen ions are translocated across the cytoplasmic membrane), and thus conserves the redox energy in a proton gradient. The sequence is that of NAD(P)H-quinone oxidoreductase chain 4 from Prochlorococcus marinus (strain MIT 9215).